Consider the following 1173-residue polypeptide: DNA polymerase catalytic subunit (1173 aa).

2 disordered regions span residues 554–625 (PSLP…SASG) and 1123–1144 (EGPG…PPRK). Gly residues predominate over residues 564-578 (GGDGAGLEGGDGGTA). Over residues 591 to 606 (DGEDEDDPEGGDEGEN) the composition is skewed to acidic residues. Residues 607–618 (GECRENGLEKEG) show a composition bias toward basic and acidic residues. Positions 1123–1138 (EGPGRGEGLGVGGGEG) are enriched in gly residues.

The protein belongs to the DNA polymerase type-B family.

It localises to the host nucleus. The catalysed reaction is DNA(n) + a 2'-deoxyribonucleoside 5'-triphosphate = DNA(n+1) + diphosphate. This chain is DNA polymerase catalytic subunit (UL54), found in Rattus.